The chain runs to 347 residues: Aurora kinase A- and ninein-interacting protein (347 aa).

Residues 182–347 (QREAKRKREG…DSEGNRVIRH (166 aa)) form an interaction with AURKA region. An interaction with RBBP8/CtIP region spans residues 273 to 347 (RDSWSQLFTE…DSEGNRVIRH (75 aa)). At Ser-284 the chain carries Phosphoserine. The span at 301–322 (VTNARNQGSGQFPDSPQAQGQD) shows a compositional bias: polar residues. The tract at residues 301–325 (VTNARNQGSGQFPDSPQAQGQDGPT) is disordered.

The protein belongs to the AUNIP family. As to quaternary structure, interacts (via C-terminus) with AURKA (via C-terminus). Interacts (via N-terminus) with NIN; this interaction blocks NIN phosphorylation by both AURKA and GSK3B. Identified in a complex with NIN and AURKA. Interacts with RBBP8/CtIP.

The protein resides in the nucleus. The protein localises to the chromosome. It localises to the cytoplasm. It is found in the cytoskeleton. Its subcellular location is the microtubule organizing center. The protein resides in the centrosome. The protein localises to the spindle pole. DNA-binding protein that accumulates at DNA double-strand breaks (DSBs) following DNA damage and promotes DNA resection and homologous recombination. Serves as a sensor of DNA damage: binds DNA with a strong preference for DNA substrates that mimic structures generated at stalled replication forks, and anchors RBBP8/CtIP to DSB sites to promote DNA end resection and ensuing homologous recombination repair. Inhibits non-homologous end joining (NHEJ). Required for the dynamic movement of AURKA at the centrosomes and spindle apparatus during the cell cycle. The polypeptide is Aurora kinase A- and ninein-interacting protein (Rattus norvegicus (Rat)).